The following is a 1006-amino-acid chain: MDVRCINWFESHGENRFLYLKSRCRNGETVFIRFPHYFYYVVTDEIYQSLSPPPFNARPLGKMRTIDIDETISYNLDIKDRKCSVADMWLIEEPKKRSIQNATMDEFLNISWFYISNGISPDGCYSLDEQYLTKINNGCYHCDDPRNCFAKKIPRFDIPRSYLFLDIECHFDKKFPSVFINPISHTSYCYIDLSGKRLLFTLINEEMLTEQEIQEAVDRGCLRIQSLMEMDYERELVLCSEIVLLRIAKQLLELTFDYVVTFNGHNFDLRYITNRLELLTGEKIIFRSPDKKEAVYLCIYERNQSSHKGVGGMANTTFHVNNNNGTIFFDLYSFIQKSEKLDSYKLDSISKNAFSCMGKVLNRGVREMTFIGDDTTDAKGKAAAFAKVLTTGNYVTVDEDIICKVIRKDIWENGFKVVLLCPTLPNDTYKLSFGKDDVDLAQMYKDYNLNIALDMARYCIHDACLCQYLWEYYGVETKTDAGASTYVLPQSMVFEYRASTVIKGPLLKLLLETKTILVRSETKQKFPYEGGKVFAPKQKMFSNNVLIFDYNSLYPNVCIFGNLSPETLVGVVVSTNRLEEEINNQLLLQKYPPPRYITVHCEPRLPNLISEIAIFDRSIEGTIPRLLRTFLAERARYKKMLKQATSSTEKAIYDSMQYTYKIVANSVYGLMGFRNSALYSYASAKSCTSIGRRMILYLESVLNGAELSNGMLRFANPLSNPFYMDDRDINPIVKTSLPIDYRFRFRSVYGDTDSVFTEIDSQDVDKSIEIAKELERLINNRVLFNNFKIEFEAVYKNLIMQSKKKYTTMKYSASSNSKSVPERINKGTSETRRDVSKFHKNMIKTYKTRLSEMLSEGRMNSNQVCIDILRSLETDLRSEFDSRSSPLELFMLSRMHHSNYKSADNPNMYLVTEYNKNNPETIELGERYYFAYICPANVPWTKKLVNIKTYETIIDRSFKLGSDQRIFYEVYFKRLTSEIVNLLDNKVLCISFFERMFGSKPTFYEA.

The protein belongs to the DNA polymerase type-B family. As to quaternary structure, interacts with OPG148/A20. Component of the Uracil-DNA glycosylase(UDG)-OPG148/A20-polymerase complex; OPG148/A20 and OPG116/UDG form a heterodimeric processivity factor that associates with OPG071/E9 to form the processive polymerase holoenzyme.

The catalysed reaction is DNA(n) + a 2'-deoxyribonucleoside 5'-triphosphate = DNA(n+1) + diphosphate. In terms of biological role, catalyzes DNA synthesis. Acquires processivity by associating with a heterodimeric processivity factor comprised of the viral OPG148/A20 and OPG116/D4 proteins, thereby forming the DNA polymerase holoenzyme. Displays 3'- to 5' exonuclease activity. Might participate in viral DNA recombination. Does not perform OPG116/D4synthesis across an abasic site. The sequence is that of DNA polymerase (OPG071) from Bos taurus (Bovine).